We begin with the raw amino-acid sequence, 1115 residues long: Rho GTPase-activating protein gacW (1115 aa).

The tract at residues 661-691 is disordered; it reads PPIGPPSTPTKSSNPGFQTLPKRPTRGPLYP. The Rho-GAP domain maps to 699–880; that stretch reads VTLTDKAQIN…FMIVNYFDIF (182 aa). Disordered stretches follow at residues 888–1065 and 1092–1115; these read SSDN…GDGK and ESRT…GPSL. Low complexity predominate over residues 898–929; sequence DSTQSTCTTNNNNLVATSLSSPISPSTTPTKS. Composition is skewed to polar residues over residues 934-943 and 959-990; these read LHTTVEVSRS and RPIS…SRPS. The span at 1013 to 1046 shows a compositional bias: low complexity; it reads SNHSSSGQLNNNNSNNNTTSNSSNSSSGKSSSNP.

It is found in the cytoplasm. Rho GTPase-activating protein involved in the signal transduction pathway. This is Rho GTPase-activating protein gacW (gacW) from Dictyostelium discoideum (Social amoeba).